We begin with the raw amino-acid sequence, 841 residues long: Envelope glycoprotein H (841 aa).

Positions Met-1–Ala-17 are cleaved as a signal peptide. Asn-18, Asn-45, and Asn-217 each carry an N-linked (GlcNAc...) asparagine; by host glycan. Over Asn-18–Gly-802 the chain is Virion surface. Residues Asp-246–Leu-309 are interaction with gL. N-linked (GlcNAc...) asparagine; by host glycans are attached at residues Asn-317, Asn-499, Asn-522, Asn-760, and Asn-783. The helical transmembrane segment at Gln-803–Gly-823 threads the bilayer. Over Trp-824–Thr-841 the chain is Intravirion.

This sequence belongs to the herpesviridae glycoprotein H family. In terms of assembly, interacts with glycoprotein L (gL); this interaction is necessary for the correct processing and cell surface expression of gH. The heterodimer gH/gL seems to interact with gB trimers during fusion. N-glycosylated, O-glycosylated, and sialylated.

The protein localises to the virion membrane. It is found in the host cell membrane. The protein resides in the host endosome membrane. Its function is as follows. The heterodimer glycoprotein H-glycoprotein L is required for the fusion of viral and plasma membranes leading to virus entry into the host cell. Following initial binding to host receptor, membrane fusion is mediated by the fusion machinery composed of gB and the heterodimer gH/gL. May also be involved in the fusion between the virion envelope and the outer nuclear membrane during virion morphogenesis. The polypeptide is Envelope glycoprotein H (Varicella-zoster virus (strain Oka vaccine) (HHV-3)).